A 272-amino-acid polypeptide reads, in one-letter code: Dermonecrotic toxin SpeSicTox-betaIB1a (272 aa).

Residue His-5 is part of the active site. Mg(2+) is bound by residues Glu-25 and Asp-27. The Nucleophile role is filled by His-41. Disulfide bonds link Cys-45-Cys-51 and Cys-47-Cys-191. Residue Asp-85 participates in Mg(2+) binding.

Belongs to the arthropod phospholipase D family. Class II subfamily. The cofactor is Mg(2+). In terms of tissue distribution, expressed by the venom gland.

It localises to the secreted. It catalyses the reaction an N-(acyl)-sphingosylphosphocholine = an N-(acyl)-sphingosyl-1,3-cyclic phosphate + choline. The enzyme catalyses an N-(acyl)-sphingosylphosphoethanolamine = an N-(acyl)-sphingosyl-1,3-cyclic phosphate + ethanolamine. It carries out the reaction a 1-acyl-sn-glycero-3-phosphocholine = a 1-acyl-sn-glycero-2,3-cyclic phosphate + choline. The catalysed reaction is a 1-acyl-sn-glycero-3-phosphoethanolamine = a 1-acyl-sn-glycero-2,3-cyclic phosphate + ethanolamine. Dermonecrotic toxins cleave the phosphodiester linkage between the phosphate and headgroup of certain phospholipids (sphingolipid and lysolipid substrates), forming an alcohol (often choline) and a cyclic phosphate. This toxin acts on sphingomyelin (SM). It may also act on ceramide phosphoethanolamine (CPE), lysophosphatidylcholine (LPC) and lysophosphatidylethanolamine (LPE), but not on lysophosphatidylserine (LPS), and lysophosphatidylglycerol (LPG). It acts by transphosphatidylation, releasing exclusively cyclic phosphate products as second products. Induces dermonecrosis, hemolysis, increased vascular permeability, edema, inflammatory response, and platelet aggregation. The chain is Dermonecrotic toxin SpeSicTox-betaIB1a from Sicarius peruensis (Six-eyed sand spider).